The sequence spans 196 residues: UMP-CMP kinase (196 aa).

Residue 13–18 (GAGKGT) coordinates ATP. Residues 33–63 (SAGDLLRDERKKPDSQYGELIESYIRDGRIV) form an NMP region. A ribonucleoside 5'-phosphate contacts are provided by residues Arg-39, 61–63 (RIV), and 93–96 (GFPR). Asn-100 serves as a coordination point for CMP. The tract at residues 133–143 (ERGKSSGRSDD) is LID. ATP is bound at residue Arg-134. A ribonucleoside 5'-phosphate is bound by residues Arg-140 and Arg-151. Lys-179 contacts ATP.

It belongs to the adenylate kinase family. UMP-CMP kinase subfamily. In terms of assembly, monomer. Mg(2+) is required as a cofactor.

It localises to the cytoplasm. The protein localises to the nucleus. The enzyme catalyses CMP + ATP = CDP + ADP. The catalysed reaction is dCMP + ATP = dCDP + ADP. It catalyses the reaction UMP + ATP = UDP + ADP. It carries out the reaction a 2'-deoxyribonucleoside 5'-diphosphate + ATP = a 2'-deoxyribonucleoside 5'-triphosphate + ADP. The enzyme catalyses a ribonucleoside 5'-diphosphate + ATP = a ribonucleoside 5'-triphosphate + ADP. Catalyzes the phosphorylation of pyrimidine nucleoside monophosphates at the expense of ATP. Plays an important role in de novo pyrimidine nucleotide biosynthesis. Has preference for UMP and CMP as phosphate acceptors. Also displays broad nucleoside diphosphate kinase activity. The sequence is that of UMP-CMP kinase (cmpk1) from Xenopus tropicalis (Western clawed frog).